The following is a 187-amino-acid chain: Pyridoxal 5'-phosphate synthase subunit PdxT (187 aa).

Position 47–49 (47–49 (GES)) interacts with L-glutamine. Residue C76 is the Nucleophile of the active site. Residues R102 and 128–129 (IR) contribute to the L-glutamine site. Catalysis depends on charge relay system residues H165 and E167.

This sequence belongs to the glutaminase PdxT/SNO family. In the presence of PdxS, forms a dodecamer of heterodimers. Only shows activity in the heterodimer.

It carries out the reaction aldehydo-D-ribose 5-phosphate + D-glyceraldehyde 3-phosphate + L-glutamine = pyridoxal 5'-phosphate + L-glutamate + phosphate + 3 H2O + H(+). It catalyses the reaction L-glutamine + H2O = L-glutamate + NH4(+). It participates in cofactor biosynthesis; pyridoxal 5'-phosphate biosynthesis. Its function is as follows. Catalyzes the hydrolysis of glutamine to glutamate and ammonia as part of the biosynthesis of pyridoxal 5'-phosphate. The resulting ammonia molecule is channeled to the active site of PdxS. This chain is Pyridoxal 5'-phosphate synthase subunit PdxT, found in Methanococcus maripaludis (strain C7 / ATCC BAA-1331).